Reading from the N-terminus, the 312-residue chain is DNA-directed RNA polymerase subunit alpha (312 aa).

An alpha N-terminal domain (alpha-NTD) region spans residues 1–226 (MIEFEKPNIT…EHLDIFVNLT (226 aa)). The tract at residues 243 to 312 (KEKMLEMTIE…DLGLGLRKED (70 aa)) is alpha C-terminal domain (alpha-CTD).

Belongs to the RNA polymerase alpha chain family. As to quaternary structure, homodimer. The RNAP catalytic core consists of 2 alpha, 1 beta, 1 beta' and 1 omega subunit. When a sigma factor is associated with the core the holoenzyme is formed, which can initiate transcription.

The enzyme catalyses RNA(n) + a ribonucleoside 5'-triphosphate = RNA(n+1) + diphosphate. DNA-dependent RNA polymerase catalyzes the transcription of DNA into RNA using the four ribonucleoside triphosphates as substrates. The protein is DNA-directed RNA polymerase subunit alpha of Lacticaseibacillus casei (strain BL23) (Lactobacillus casei).